Here is a 233-residue protein sequence, read N- to C-terminus: Purine nucleoside phosphorylase DeoD-type (233 aa).

His4 provides a ligand contact to a purine D-ribonucleoside. Residues Gly20, Arg24, Arg43, and 87–90 (RVGT) contribute to the phosphate site. A purine D-ribonucleoside contacts are provided by residues Glu162, 179 to 181 (EME), and 203 to 204 (SD). Asp204 acts as the Proton donor in catalysis.

This sequence belongs to the PNP/UDP phosphorylase family. As to quaternary structure, homohexamer; trimer of homodimers.

It catalyses the reaction a purine D-ribonucleoside + phosphate = a purine nucleobase + alpha-D-ribose 1-phosphate. It carries out the reaction a purine 2'-deoxy-D-ribonucleoside + phosphate = a purine nucleobase + 2-deoxy-alpha-D-ribose 1-phosphate. In terms of biological role, catalyzes the reversible phosphorolytic breakdown of the N-glycosidic bond in the beta-(deoxy)ribonucleoside molecules, with the formation of the corresponding free purine bases and pentose-1-phosphate. The sequence is that of Purine nucleoside phosphorylase DeoD-type from Alkaliphilus metalliredigens (strain QYMF).